A 411-amino-acid chain; its full sequence is MGGCGSADSWVEAAPAQGWPAQYGDAANSSYTTTNGATNLTLRWTRSVKGSLAAGPALSARGYLALNGQTPAGCSLMEWQNDNNGRQRWCVRLVQGGGFAGPLFDGFDNLYVGQPGAIISFPPTQWTRWRQPVIGMPSTPRFLGHGRLLVSTHLGQLLVFDTRRGMVVGSPVDLVDGIDPTDATRGLADCAPARPGCPVAAAPAFSSVNGTVVVSVWQPGEPAAKLVGLKYHAEQLVREWTSDAVSAGVLASPVLSADGSTVYVNGRDHRLWALNAADGKAKWSAPLGFLAQTPPALTPHGLIVSGGGPDTALAAFRDAGDHAEGAWRRDDVTALSTASLAGTGVGYTVISGPNHDGTPGLSLLVFDPANGHTVNSYPLPGATGYPVGVSVGNDRRVVTATSDGQVYSFAP.

This is Protein Rv3035 from Mycobacterium tuberculosis (strain ATCC 25618 / H37Rv).